The chain runs to 62 residues: UPF0434 protein Tola_2233 (62 aa).

The protein belongs to the UPF0434 family.

This Tolumonas auensis (strain DSM 9187 / NBRC 110442 / TA 4) protein is UPF0434 protein Tola_2233.